The primary structure comprises 375 residues: tRNA-specific 2-thiouridylase MnmA (375 aa).

ATP contacts are provided by residues 16 to 23 and Met42; that span reads GMSGGVDS. The interaction with target base in tRNA stretch occupies residues 102-104; the sequence is NPD. The active-site Nucleophile is Cys107. The cysteines at positions 107 and 203 are disulfide-linked. An ATP-binding site is contributed by Gly131. The interval 153 to 155 is interaction with tRNA; the sequence is KDQ. The Cysteine persulfide intermediate role is filled by Cys203. The tract at residues 315-316 is interaction with tRNA; the sequence is RY.

Belongs to the MnmA/TRMU family.

The protein resides in the cytoplasm. It carries out the reaction S-sulfanyl-L-cysteinyl-[protein] + uridine(34) in tRNA + AH2 + ATP = 2-thiouridine(34) in tRNA + L-cysteinyl-[protein] + A + AMP + diphosphate + H(+). In terms of biological role, catalyzes the 2-thiolation of uridine at the wobble position (U34) of tRNA, leading to the formation of s(2)U34. The chain is tRNA-specific 2-thiouridylase MnmA from Pseudomonas paraeruginosa (strain DSM 24068 / PA7) (Pseudomonas aeruginosa (strain PA7)).